The primary structure comprises 344 residues: MSTSTAAPAPSLSDLCPAALRRPVAAALRALDPAPARLAVAVSGGADSAMLAVAAAAVLPPGCTLRLFHVHHGLQAAADQWAAQVRGLGALLGVPVDEARVTVPPGQGLGMEAAARLARYQALAGLARQHGVRHILLAHHRNDQAETVLLRLLRGTGLQGMAAMAPLSERDGVAYLRPWLDVDRAAILALAGAVRAQCGWQAVQDPTNTDPRYARAAVRTQLAPALDARWPGWQAIVARHARQMAEAAEIVAEVARADFDTLEPADAGRSFSLAAWRGLSAARQAQALRHWLASQDAPMPTEARLAELQRQLRQLHALGHDRHLRWQHAGRVVRCERGRVWIDD.

43–48 (SGGADS) is a binding site for ATP.

The protein belongs to the tRNA(Ile)-lysidine synthase family.

The protein localises to the cytoplasm. The enzyme catalyses cytidine(34) in tRNA(Ile2) + L-lysine + ATP = lysidine(34) in tRNA(Ile2) + AMP + diphosphate + H(+). Ligates lysine onto the cytidine present at position 34 of the AUA codon-specific tRNA(Ile) that contains the anticodon CAU, in an ATP-dependent manner. Cytidine is converted to lysidine, thus changing the amino acid specificity of the tRNA from methionine to isoleucine. The chain is tRNA(Ile)-lysidine synthase from Bordetella parapertussis (strain 12822 / ATCC BAA-587 / NCTC 13253).